A 508-amino-acid polypeptide reads, in one-letter code: Photosystem II CP47 reaction center protein (508 aa).

6 helical membrane-spanning segments follow: residues A21–S36, I101–W115, G140–F156, I203–S218, V237–V252, and S457–R472.

Belongs to the PsbB/PsbC family. PsbB subfamily. PSII is composed of 1 copy each of membrane proteins PsbA, PsbB, PsbC, PsbD, PsbE, PsbF, PsbH, PsbI, PsbJ, PsbK, PsbL, PsbM, PsbT, PsbX, PsbY, PsbZ, Psb30/Ycf12, at least 3 peripheral proteins of the oxygen-evolving complex and a large number of cofactors. It forms dimeric complexes. It depends on Binds multiple chlorophylls. PSII binds additional chlorophylls, carotenoids and specific lipids. as a cofactor.

The protein localises to the plastid. It localises to the chloroplast thylakoid membrane. One of the components of the core complex of photosystem II (PSII). It binds chlorophyll and helps catalyze the primary light-induced photochemical processes of PSII. PSII is a light-driven water:plastoquinone oxidoreductase, using light energy to abstract electrons from H(2)O, generating O(2) and a proton gradient subsequently used for ATP formation. This chain is Photosystem II CP47 reaction center protein, found in Nandina domestica (Heavenly bamboo).